Here is a 503-residue protein sequence, read N- to C-terminus: AMP phosphorylase (503 aa).

Residues Gly168, 194 to 199 (SRAITS), and Thr203 each bind AMP. Asp256 acts as the Proton donor in catalysis. The AMP site is built by Ser264 and Lys288.

The protein belongs to the thymidine/pyrimidine-nucleoside phosphorylase family. Type 2 subfamily. As to quaternary structure, forms an exceptionally large macromolecular structure (&gt;40-mers) in solution.

It catalyses the reaction AMP + phosphate = alpha-D-ribose 1,5-bisphosphate + adenine. The enzyme catalyses CMP + phosphate = cytosine + alpha-D-ribose 1,5-bisphosphate. The catalysed reaction is UMP + phosphate = alpha-D-ribose 1,5-bisphosphate + uracil. Its activity is regulated as follows. AMP phosphorolysis is allosterically regulated by the substrate AMP. Catalyzes the conversion of AMP and phosphate to adenine and ribose 1,5-bisphosphate (R15P). Exhibits phosphorylase activity toward CMP, dCMP and UMP in addition to AMP. Functions in an archaeal AMP degradation pathway, together with R15P isomerase and RubisCO. In Thermococcus kodakarensis (strain ATCC BAA-918 / JCM 12380 / KOD1) (Pyrococcus kodakaraensis (strain KOD1)), this protein is AMP phosphorylase.